Consider the following 447-residue polypeptide: C4-dicarboxylate transport protein (447 aa).

Transmembrane regions (helical) follow at residues 21-41 (HLYV…YFAP), 57-77 (LVKM…IAGM), 92-112 (IYFL…VNIV), 141-161 (SLIG…LASG), 163-183 (ILQV…VGEA), 201-221 (LVAI…AYTV), 232-252 (LAML…IVLG), 320-340 (IYMT…LSWG), 345-365 (LLAV…AGFV), and 368-388 (AATL…IFGV).

Belongs to the dicarboxylate/amino acid:cation symporter (DAACS) (TC 2.A.23) family.

Its subcellular location is the cell inner membrane. Its function is as follows. Responsible for the transport of dicarboxylates such as succinate, fumarate, and malate from the periplasm across the membrane. This chain is C4-dicarboxylate transport protein, found in Granulibacter bethesdensis (strain ATCC BAA-1260 / CGDNIH1).